The chain runs to 327 residues: Putative cyclin-dependent kinase F-2 (327 aa).

Residues 4–295 enclose the Protein kinase domain; that stretch reads YECLGKIGEG…AADALRCAWF (292 aa). ATP-binding positions include 10-18 and Lys33; that span reads IGEGAAGVV. Asp134 acts as the Proton acceptor in catalysis. Thr167 is modified (phosphothreonine).

It belongs to the protein kinase superfamily. CMGC Ser/Thr protein kinase family. CDC2/CDKX subfamily.

It carries out the reaction L-seryl-[protein] + ATP = O-phospho-L-seryl-[protein] + ADP + H(+). It catalyses the reaction L-threonyl-[protein] + ATP = O-phospho-L-threonyl-[protein] + ADP + H(+). The enzyme catalyses [DNA-directed RNA polymerase] + ATP = phospho-[DNA-directed RNA polymerase] + ADP + H(+). This is Putative cyclin-dependent kinase F-2 (CDKF-2) from Oryza sativa subsp. japonica (Rice).